We begin with the raw amino-acid sequence, 1415 residues long: Uveal autoantigen with coiled-coil domains and ankyrin repeats (1415 aa).

5 ANK repeats span residues Glu69 to Thr98, Ala102 to His131, Gln135 to Ala164, Asp168 to Ser197, and Gln201 to Leu230. Positions Val288–Lys376 form a coiled coil. Residues Glu617–Val646 form an ANK 6 repeat. A coiled-coil region spans residues Thr759–Ala1381. A Glycyl lysine isopeptide (Lys-Gly) (interchain with G-Cter in SUMO2) cross-link involves residue Lys1034. Residues Leu1186 to Ser1201 show a composition bias toward basic and acidic residues. Residues Leu1186–Ser1205 form a disordered region.

In terms of assembly, component of the apoptosome complex, composed of APAF1, pro-caspase-9 and UACA. In the complex, it probably interacts directly with APAF1. Interacts with LGALS3, ARF6 and ACTB. Interacts with RAB39A. As to expression, highly expressed in adrenal, testis, kidney and large intestine.

It localises to the nucleus. Its subcellular location is the cytoplasm. The protein localises to the cytoskeleton. Functionally, regulates APAF1 expression and plays an important role in the regulation of stress-induced apoptosis. Promotes apoptosis by regulating three pathways, apoptosome up-regulation, LGALS3/galectin-3 down-regulation and NF-kappa-B inactivation. Regulates the redistribution of APAF1 into the nucleus after proapoptotic stress. Down-regulates the expression of LGALS3 by inhibiting NFKB1. In terms of biological role, modulates isoactin dynamics to regulate the morphological alterations required for cell growth and motility. Interaction with ARF6 may modulate cell shape and motility after injury. May be involved in multiple neurite formation. The polypeptide is Uveal autoantigen with coiled-coil domains and ankyrin repeats (UACA) (Canis lupus familiaris (Dog)).